The primary structure comprises 1347 residues: Spermatogenesis-associated protein 31A1 (1347 aa).

Residues 23–43 form a helical membrane-spanning segment; that stretch reads PWVLDIFLTLVFALGFFFLLL. 6 disordered regions span residues 55–89, 106–235, 373–397, 628–658, 899–955, and 1085–1160; these read PSPS…ECPR, GPHL…STLI, EQDT…GPQK, DESP…EAQK, PRGI…REAV, and HEEP…PPSV. A compositionally biased stretch (basic residues) spans 60 to 82; that stretch reads GKRKCPVGRRRRPRGRMKNHSLR. The segment covering 165–178 has biased composition (polar residues); the sequence is LASTPSPGPMTTSV. The span at 198 to 222 shows a compositional bias: pro residues; that stretch reads PEPPALFPHPPHTPDPLACSPPPPK. Composition is skewed to polar residues over residues 631-651 and 927-948; these read PGTS…STGE and LTYS…SSKA. Composition is skewed to basic and acidic residues over residues 1108-1127 and 1137-1146; these read HKSE…RLEG and RKTEDTHQDE.

It belongs to the SPATA31 family.

The protein resides in the membrane. In terms of biological role, may play a role in spermatogenesis. The sequence is that of Spermatogenesis-associated protein 31A1 from Homo sapiens (Human).